We begin with the raw amino-acid sequence, 59 residues long: Putative potassium channel toxin Ts25 (59 aa).

The signal sequence occupies residues 1-22 (MKAFYGILIIFILISMIHLSQQ). 3 disulfides stabilise this stretch: C29–C50, C35–C55, and C39–C57.

Belongs to the short scorpion toxin superfamily. Potassium channel inhibitor family. Alpha-KTx 04 subfamily. As to expression, expressed by the venom gland.

The protein localises to the secreted. In terms of biological role, potently blocks Kv1.1/KCNA1 (85%), Kv1.2/KCNA2 (91%), Kv1.3/KCNA3 (89%), Kv1.6/KCNA6 (94%), and Shaker (97%). The chain is Putative potassium channel toxin Ts25 from Tityus serrulatus (Brazilian scorpion).